Here is a 140-residue protein sequence, read N- to C-terminus: PDZ domain-containing protein 11 (140 aa).

Residues 47 to 129 (TVVLKKPPGA…ITMRVRYFPY (83 aa)) form the PDZ domain.

It localises to the cytoplasm. This chain is PDZ domain-containing protein 11 (PDZD11), found in Gallus gallus (Chicken).